A 619-amino-acid chain; its full sequence is Leucine aminopeptidase 2 (619 aa).

Residues 141-143 and 273-278 contribute to the a peptide site; these read QCQ and PYGGME. Histidine 302 provides a ligand contact to Zn(2+). Catalysis depends on glutamate 303, which acts as the Proton acceptor. The Zn(2+) site is built by histidine 306 and glutamate 325. The active-site Proton donor is the tyrosine 390.

It belongs to the peptidase M1 family. Zn(2+) is required as a cofactor.

It localises to the cytoplasm. The protein resides in the nucleus. It catalyses the reaction an epoxide + H2O = an ethanediol. Aminopeptidase that preferentially cleaves di- and tripeptides. Also has low epoxide hydrolase activity (in vitro). Can hydrolyze the epoxide leukotriene LTA(4) but it forms preferentially 5,6-dihydroxy-7,9,11,14-eicosatetraenoic acid rather than the cytokine leukotriene B(4) as the product compared to the homologous mammalian enzyme (in vitro). In Coccidioides immitis (strain RS) (Valley fever fungus), this protein is Leucine aminopeptidase 2.